The chain runs to 256 residues: Putative transposase for insertion sequence element IS112 (256 aa).

This sequence belongs to the transposase 11 family.

Functionally, involved in the transposition of the insertion sequence IS112 which inactivates the SalI restriction-modification system. The sequence is that of Putative transposase for insertion sequence element IS112 from Streptomyces albus G.